Here is a 333-residue protein sequence, read N- to C-terminus: MLLPSKKDLKTALDVFAVFQWSFSALLITTTVIAVNLYLVVFTPYWPVTVLILTWLAFDWKTPQRGGRRFTCVRHWRLWKHYSDYFPLKLLKTHDICPSRNYILVCHPHGLFAHGWFGHFATEASGFSKIFPGITPYILTLGAFFWMPFLREYVMSTGACSVSRSSIDFLLTHKGTGNMVIVVIGGLAECRYSLPGSSTLVLKNRSGFVRMALQHGVPLIPAYAFGETDLYDQHIFTPGGFVNRFQKWFQSMVHIYPCAFYGRGFTKNSWGLLPYSRPVTTIVGEPLPMPKIENPSQEIVAKYHTLYIDALRKLFDQHKTKFGISETQELEII.

3 helical membrane passes run 15–35 (VFAV…VIAV), 38–58 (YLVV…WLAF), and 130–150 (IFPG…MPFL).

This sequence belongs to the diacylglycerol acyltransferase family. Monomer. Highly expressed in skin, where it is primarily restricted to undifferentiated peripheral sebocytes. Also expressed at lower level in other tissues except pancreas.

Its subcellular location is the endoplasmic reticulum membrane. It catalyses the reaction a long chain fatty alcohol + a fatty acyl-CoA = a wax ester + CoA. It carries out the reaction all-trans-retinol + an acyl-CoA = an all-trans-retinyl ester + CoA. The enzyme catalyses an acyl-CoA + a 1,2-diacyl-sn-glycerol = a triacyl-sn-glycerol + CoA. The catalysed reaction is 11-cis-retinol + a fatty acyl-CoA = 11-cis-retinyl ester + CoA. It catalyses the reaction 9-cis-retinol + a fatty acyl-CoA = 9-cis-retinyl ester + CoA. It carries out the reaction 13-cis-retinol + a fatty acyl-CoA = 13-cis-retinyl ester + CoA. The enzyme catalyses a 1-acylglycerol + an acyl-CoA = a 1,2-diacylglycerol + CoA. The catalysed reaction is 1-O-alkylglycerol + an acyl-CoA = 1-O-alkyl-3-acylglycerol + CoA. It catalyses the reaction a 2-acylglycerol + an acyl-CoA = a 1,2-diacyl-sn-glycerol + CoA. It carries out the reaction 2-(9Z-octadecenoyl)-glycerol + hexadecanoyl-CoA = 1-hexadecanoyl-2-(9Z-octadecenoyl)-sn-glycerol + CoA. The enzyme catalyses 1,2-di-(9Z-octadecenoyl)-sn-glycerol + hexadecanoyl-CoA = 1,2-di-(9Z)-octadecenoyl-3-hexadecanoyl-sn-glycerol + CoA. The catalysed reaction is hexadecan-1-ol + hexadecanoyl-CoA = hexadecanyl hexadecanoate + CoA. It catalyses the reaction hexadecane-1,2-diol + hexadecanoyl-CoA = 2-hydroxyhexadecyl hexadecanoate + CoA. It carries out the reaction 9-cis-retinol + hexadecanoyl-CoA = 9-cis-retinyl hexadecanoate + CoA. The enzyme catalyses all-trans-retinol + hexadecanoyl-CoA = all-trans-retinyl hexadecanoate + CoA. The catalysed reaction is 1,2-di-(9Z-octadecenoyl)-sn-glycerol + (9Z)-octadecenoyl-CoA = 1,2,3-tri-(9Z-octadecenoyl)-glycerol + CoA. It catalyses the reaction hexadecan-1-ol + (9Z)-octadecenoyl-CoA = hexadecanyl (9Z)-octadecenoate + CoA. It carries out the reaction (9Z)-hexadecen-1-ol + (9Z)-octadecenoyl-CoA = 1-O-(9Z)-hexadecenyl (9Z)-octadecenoate + CoA. The enzyme catalyses octadecan-1-ol + (9Z)-octadecenoyl-CoA = 1-O-octadecyl (9Z)-octadecenoate + CoA. The catalysed reaction is (9Z)-octadecen-1-ol + (9Z)-octadecenoyl-CoA = 1-O-(9Z)-octadecenyl (9Z)-octadecenoate + CoA. It catalyses the reaction hexadecan-1-ol + (9Z)-hexadecenoyl-CoA = 1-O-hexadecyl (9Z)-hexadecenoate + CoA. It carries out the reaction hexadecan-1-ol + octadecanoyl-CoA = hexadecanyl octadecanoate + CoA. The enzyme catalyses 11-cis-retinol + hexadecanoyl-CoA = 11-cis-retinyl hexadecanoate + CoA. The catalysed reaction is 1-O-(9Z-octadecenyl)-glycerol + (9Z)-octadecenoyl-CoA = 1-O-(9Z-octadecyl)-3-(9Z-octadecenoyl)-glycerol + CoA. It catalyses the reaction 1-(9Z-octadecenoyl)-glycerol + (9Z)-octadecenoyl-CoA = 1,2-di-(9Z-octadecenoyl)-glycerol + CoA. It carries out the reaction 11-cis-retinol + tetradecanoyl-CoA = 11-cis-retinyl tetradecanoate + CoA. The enzyme catalyses 9-cis-retinol + tetradecanoyl-CoA = 9-cis-retinyl tetradecanoate + CoA. The catalysed reaction is 13-cis-retinol + tetradecanoyl-CoA = 13-cis-retinyl tetradecanoate + CoA. It catalyses the reaction all-trans-retinol + tetradecanoyl-CoA = all-trans-retinyl tetradecanoate + CoA. It carries out the reaction tetradecan-1-ol + tetradecanoyl-CoA = tetradecanyl tetradecanoate + CoA. With respect to regulation, 11-cis retinoids act as allosteric modulators of acyl-CoA retinol O-fatty-acyltransferase (ARAT) activity by suppressing esterification of 9-cis, 13-cis, or all-trans retinols concurrently increasing the enzyme specificity toward 11-cis isomer. Its function is as follows. Acyltransferase that catalyzes the formation of ester bonds between fatty alcohols and fatty acyl-CoAs to form wax monoesters. Shows a preference for medium chain acyl-CoAs from C12 to C16 in length and fatty alcohols shorter than C20, as the acyl donors and acceptors, respectively. Also possesses acyl-CoA retinol acyltransferase (ARAT) activity that preferentially esterifies 11-cis-retinol, a chromophore precursor of bleached opsin pigments in cone cells. Shows higher catalytic efficiency toward 11-cis-retinol versus 9-cis-retinol, 13-cis-retinol, and all-trans-retinol substrates. This chain is Acyl-CoA wax alcohol acyltransferase 2 (AWAT2), found in Homo sapiens (Human).